The chain runs to 149 residues: Calmodulin (149 aa).

Position 2 is an N-acetylalanine (A2). EF-hand domains follow at residues E8–N43, P44–D79, D81–K116, and L117–K149. Ca(2+) contacts are provided by D21, D23, D25, T27, E32, D59, N61, T63, E68, D94, D96, N98, Y100, and E105. N6,N6,N6-trimethyllysine is present on K116. 5 residues coordinate Ca(2+): D130, D132, D134, Q136, and E141.

Belongs to the calmodulin family.

Its function is as follows. Calmodulin acts as part of a calcium signal transduction pathway by mediating the control of a large number of enzymes, ion channels, aquaporins and other proteins through calcium-binding. Calcium-binding is required for the activation of calmodulin. Among the enzymes to be stimulated by the calmodulin-calcium complex are a number of protein kinases, such as myosin light-chain kinases and calmodulin-dependent protein kinase type II (CaMK2), and phosphatases. The chain is Calmodulin from Myxine glutinosa (Atlantic hagfish).